Reading from the N-terminus, the 217-residue chain is Octanoyltransferase (217 aa).

The region spanning 33 to 208 is the BPL/LPL catalytic domain; the sequence is SSSQDEIWLV…KLCSLLGIAS (176 aa). Substrate-binding positions include 72–79, 139–141, and 152–154; these read RGGQVTYH, SIG, and GLA. The active-site Acyl-thioester intermediate is Cys170.

It belongs to the LipB family.

It is found in the cytoplasm. It carries out the reaction octanoyl-[ACP] + L-lysyl-[protein] = N(6)-octanoyl-L-lysyl-[protein] + holo-[ACP] + H(+). It participates in protein modification; protein lipoylation via endogenous pathway; protein N(6)-(lipoyl)lysine from octanoyl-[acyl-carrier-protein]: step 1/2. In terms of biological role, catalyzes the transfer of endogenously produced octanoic acid from octanoyl-acyl-carrier-protein onto the lipoyl domains of lipoate-dependent enzymes. Lipoyl-ACP can also act as a substrate although octanoyl-ACP is likely to be the physiological substrate. The chain is Octanoyltransferase from Pseudoalteromonas atlantica (strain T6c / ATCC BAA-1087).